Reading from the N-terminus, the 96-residue chain is Co-chaperonin GroES (96 aa).

This sequence belongs to the GroES chaperonin family. Heptamer of 7 subunits arranged in a ring. Interacts with the chaperonin GroEL.

Its subcellular location is the cytoplasm. Its function is as follows. Together with the chaperonin GroEL, plays an essential role in assisting protein folding. The GroEL-GroES system forms a nano-cage that allows encapsulation of the non-native substrate proteins and provides a physical environment optimized to promote and accelerate protein folding. GroES binds to the apical surface of the GroEL ring, thereby capping the opening of the GroEL channel. This is Co-chaperonin GroES from Shewanella denitrificans (strain OS217 / ATCC BAA-1090 / DSM 15013).